A 207-amino-acid polypeptide reads, in one-letter code: Large ribosomal subunit protein uL4 (207 aa).

Positions 49-78 are disordered; it reads HAVKNRSAVSGGGRKPWRQKGTGRARQGSI.

The protein belongs to the universal ribosomal protein uL4 family. In terms of assembly, part of the 50S ribosomal subunit.

In terms of biological role, one of the primary rRNA binding proteins, this protein initially binds near the 5'-end of the 23S rRNA. It is important during the early stages of 50S assembly. It makes multiple contacts with different domains of the 23S rRNA in the assembled 50S subunit and ribosome. Functionally, forms part of the polypeptide exit tunnel. The sequence is that of Large ribosomal subunit protein uL4 from Streptococcus pyogenes serotype M49 (strain NZ131).